The primary structure comprises 346 residues: Phenylalanine--tRNA ligase alpha subunit (346 aa).

Glu261 is a Mg(2+) binding site.

It belongs to the class-II aminoacyl-tRNA synthetase family. Phe-tRNA synthetase alpha subunit type 1 subfamily. As to quaternary structure, tetramer of two alpha and two beta subunits. The cofactor is Mg(2+).

It localises to the cytoplasm. It carries out the reaction tRNA(Phe) + L-phenylalanine + ATP = L-phenylalanyl-tRNA(Phe) + AMP + diphosphate + H(+). The polypeptide is Phenylalanine--tRNA ligase alpha subunit (Streptococcus agalactiae serotype Ia (strain ATCC 27591 / A909 / CDC SS700)).